Consider the following 306-residue polypeptide: Porphobilinogen deaminase (306 aa).

Cysteine 240 is modified (S-(dipyrrolylmethanemethyl)cysteine).

The protein belongs to the HMBS family. As to quaternary structure, monomer. It depends on dipyrromethane as a cofactor.

The catalysed reaction is 4 porphobilinogen + H2O = hydroxymethylbilane + 4 NH4(+). The protein operates within porphyrin-containing compound metabolism; protoporphyrin-IX biosynthesis; coproporphyrinogen-III from 5-aminolevulinate: step 2/4. In terms of biological role, tetrapolymerization of the monopyrrole PBG into the hydroxymethylbilane pre-uroporphyrinogen in several discrete steps. This Syntrophomonas wolfei subsp. wolfei (strain DSM 2245B / Goettingen) protein is Porphobilinogen deaminase.